The following is a 549-amino-acid chain: Elongator complex protein 3 (549 aa).

Residues 84–374 (RTASGIAVVA…YRVQRDIPMP (291 aa)) form the Radical SAM core domain. Residues cysteine 101, cysteine 111, and cysteine 114 each contribute to the [4Fe-4S] cluster site. Residues lysine 166, 476-479 (ELHV), 499-501 (FGM), and tyrosine 532 each bind acetyl-CoA. The N-acetyltransferase domain maps to 398–549 (TECRDVRTRE…EGPYMVKKLD (152 aa)).

It belongs to the ELP3 family. In terms of assembly, component of the elongator complex. Interacts with transcriptional repressors snai1 and snai2; interaction with snai1 inhibits its ubiquitination and stabilizes it. [4Fe-4S] cluster is required as a cofactor.

It localises to the cytoplasm. The protein localises to the nucleus. It carries out the reaction uridine(34) in tRNA + acetyl-CoA + S-adenosyl-L-methionine + H2O = 5-(carboxymethyl)uridine(34) in tRNA + 5'-deoxyadenosine + L-methionine + CoA + 2 H(+). It functions in the pathway tRNA modification; 5-methoxycarbonylmethyl-2-thiouridine-tRNA biosynthesis. Functionally, catalytic tRNA acetyltransferase subunit of the elongator complex which is required for multiple tRNA modifications, including mcm5U (5-methoxycarbonylmethyl uridine), mcm5s2U (5-methoxycarbonylmethyl-2-thiouridine), and ncm5U (5-carbamoylmethyl uridine). In the elongator complex, acts as a tRNA uridine(34) acetyltransferase by mediating formation of carboxymethyluridine in the wobble base at position 34 in tRNAs. Stabilizes transcriptional repressor snai1 by inhibiting its ubiquitination which promotes neural crest cell migration. This is Elongator complex protein 3 from Xenopus tropicalis (Western clawed frog).